A 302-amino-acid polypeptide reads, in one-letter code: FeMo cofactor biosynthesis protein NifB (302 aa).

The Radical SAM core domain occupies His-22–Arg-264. Residues Cys-36, Cys-40, and Cys-43 each contribute to the [4Fe-4S] cluster site. The S-adenosyl-L-methionine site is built by Gly-91, Thr-142, and Ile-194. 2 residues coordinate [4Fe-4S] cluster: Cys-260 and Cys-263.

This sequence belongs to the radical SAM superfamily. NifB family. Monomer. It depends on [4Fe-4S] cluster as a cofactor.

The protein operates within cofactor biosynthesis; Fe-Mo cofactor biosynthesis. Involved in the biosynthesis of the iron-molybdenum cofactor (FeMo-co or M-cluster) found in the dinitrogenase enzyme of the nitrogenase complex in nitrogen-fixing microorganisms. NifB catalyzes the crucial step of radical SAM-dependent carbide insertion that occurs concomitant with the insertion of a 9th sulfur and the rearrangement/coupling of two [4Fe-4S] clusters into a [8Fe-9S-C] cluster, the precursor to the M-cluster. In Methanocaldococcus infernus (strain DSM 11812 / JCM 15783 / ME), this protein is FeMo cofactor biosynthesis protein NifB.